A 161-amino-acid chain; its full sequence is Allophycocyanin alpha chain (161 aa).

An N4-methylasparagine modification is found at Asn-71. Residue Cys-81 participates in (2R,3E)-phycocyanobilin binding.

This sequence belongs to the phycobiliprotein family. As to quaternary structure, component of the phycobilisome. Heterodimer of an alpha and a beta chain. Contains one covalently linked phycocyanobilin chromophore.

It is found in the cellular thylakoid membrane. Functionally, light-harvesting photosynthetic bile pigment-protein from the phycobiliprotein complex. Allophycocyanin has a maximum absorption at approximately 650 nanometers. This is Allophycocyanin alpha chain (apcA) from Arthrospira platensis (Spirulina platensis).